The chain runs to 404 residues: Ubiquitin-like modifier-activating enzyme 5 (404 aa).

Ser-45 carries the phosphoserine modification. 5 residues coordinate ATP: Gly-83, Asp-104, Lys-127, Asn-150, and Asn-184. Positions 226 and 229 each coordinate Zn(2+). Residue Cys-250 is the Glycyl thioester intermediate of the active site. Zn(2+) is bound by residues Cys-303 and Cys-308. The UFM1-interacting sequence (UIS) motif lies at 334 to 346; the sequence is IIHEDNEWGIELV. Residues 347–377 form a linker region; sequence SEVSEEELKNSSGPVPDLPEGITVAYTIPKK. Phosphoserine is present on residues Ser-358 and Ser-393. The UFC1-binding sequence (UFC) motif lies at 389 to 404; the sequence is DSGESLEDLMAKMKNM.

Belongs to the ubiquitin-activating E1 family. UBA5 subfamily. As to quaternary structure, homodimer; homodimerization is required for UFM1 activation. Interacts (via UIS motif) with UFM1; binds UFM1 via a trans-binding mechanism in which UFM1 interacts with distinct sites in both subunits of the UBA5 homodimer. Interacts (via C-terminus) with UFC1. Interacts (via UIS motif) with GABARAPL2 and, with lower affinity, with GABARAP and GABARAPL1.

It localises to the cytoplasm. Its subcellular location is the nucleus. The protein resides in the endoplasmic reticulum membrane. The protein localises to the golgi apparatus. E1-like enzyme which specifically catalyzes the first step in ufmylation. Activates UFM1 by first adenylating its C-terminal glycine residue with ATP, and thereafter linking this residue to the side chain of a cysteine residue in E1, yielding a UFM1-E1 thioester and free AMP. Activates UFM1 via a trans-binding mechanism, in which UFM1 interacts with distinct sites in both subunits of the UBA5 homodimer. Trans-binding also promotes stabilization of the UBA5 homodimer, and enhances ATP-binding. Transfer of UFM1 from UBA5 to the E2-like enzyme UFC1 also takes place using a trans mechanism. Ufmylation plays a key role in various processes, such as ribosome recycling, response to DNA damage, interferon response or reticulophagy (also called ER-phagy). Ufmylation is essential for erythroid differentiation of both megakaryocytes and erythrocytes. The polypeptide is Ubiquitin-like modifier-activating enzyme 5 (Pongo abelii (Sumatran orangutan)).